A 428-amino-acid chain; its full sequence is GTPase Obg (428 aa).

The region spanning 1–158 is the Obg domain; the sequence is MFIDIAKVFI…LSIVLELKLL (158 aa). Residues 159–331 form the OBG-type G domain; the sequence is ADVGLLGFPN…VIKEAARMLK (173 aa). GTP-binding positions include 165-172, 190-194, 212-215, 282-285, and 312-314; these read GFPNVGKS, FTTLK, DIPG, NKSD, and SAA. Mg(2+) contacts are provided by serine 172 and threonine 192. The 84-residue stretch at 345 to 428 folds into the OCT domain; that stretch reads MYIPEEKKFT…LNDFEFEYLL (84 aa).

This sequence belongs to the TRAFAC class OBG-HflX-like GTPase superfamily. OBG GTPase family. As to quaternary structure, monomer. It depends on Mg(2+) as a cofactor.

The protein localises to the cytoplasm. Functionally, an essential GTPase which binds GTP, GDP and possibly (p)ppGpp with moderate affinity, with high nucleotide exchange rates and a fairly low GTP hydrolysis rate. Plays a role in control of the cell cycle, stress response, ribosome biogenesis and in those bacteria that undergo differentiation, in morphogenesis control. This chain is GTPase Obg, found in Clostridium botulinum (strain Alaska E43 / Type E3).